The following is a 125-amino-acid chain: Histone H2A (125 aa).

The segment covering 1-18 (MSGRGKGGKVKGKSKTRS) has biased composition (basic residues). A disordered region spans residues 1 to 23 (MSGRGKGGKVKGKSKTRSSRAGL). Residue S2 is modified to N-acetylserine. At Q104 the chain carries N5-methylglutamine.

The protein belongs to the histone H2A family. In terms of assembly, the nucleosome is a histone octamer containing two molecules each of H2A, H2B, H3 and H4 assembled in one H3-H4 heterotetramer and two H2A-H2B heterodimers. The octamer wraps approximately 147 bp of DNA.

It is found in the nucleus. The protein localises to the chromosome. In terms of biological role, core component of nucleosome. Nucleosomes wrap and compact DNA into chromatin, limiting DNA accessibility to the cellular machineries which require DNA as a template. Histones thereby play a central role in transcription regulation, DNA repair, DNA replication and chromosomal stability. DNA accessibility is regulated via a complex set of post-translational modifications of histones, also called histone code, and nucleosome remodeling. This chain is Histone H2A, found in Sepia officinalis (Common cuttlefish).